The primary structure comprises 340 residues: CMP-N-acetylneuraminate-beta-galactosamide-alpha-2,3-sialyltransferase 1 (340 aa).

At 1–13 (MVTLRKRTLKVLT) the chain is on the cytoplasmic side. The chain crosses the membrane as a helical; Signal-anchor for type II membrane protein span at residues 14-34 (FLVLFIFLTSFFLNYSHTMVA). The Lumenal portion of the chain corresponds to 35-340 (TTWFPKQMVL…INKIRIFKGR (306 aa)). 3 disulfide bridges follow: C59–C64, C61–C139, and C142–C281. N-linked (GlcNAc...) asparagine glycosylation is present at N79. Q105 contributes to the substrate binding site. N114 is a glycosylation site (N-linked (GlcNAc...) asparagine). Substrate contacts are provided by N147 and N170. N201 is a glycosylation site (N-linked (GlcNAc...) asparagine). Residues Y230, Y266, G270, G290, H299, and H316 each coordinate substrate. N323 carries N-linked (GlcNAc...) asparagine glycosylation.

It belongs to the glycosyltransferase 29 family. The soluble form derives from the membrane form by proteolytic processing. As to expression, expressed in several tissues. Highest expression in lung, liver, skeletal muscle, kidney, pancreas, spleen and placenta.

Its subcellular location is the golgi apparatus. It localises to the golgi stack membrane. It is found in the trans-Golgi network membrane. The protein localises to the secreted. It catalyses the reaction a beta-D-galactosyl-(1-&gt;3)-N-acetyl-alpha-D-galactosaminyl derivative + CMP-N-acetyl-beta-neuraminate = an N-acetyl-alpha-neuraminyl-(2-&gt;3)-beta-D-galactosyl-(1-&gt;3)-N-acetyl-alpha-D-galactosaminyl derivative + CMP + H(+). The enzyme catalyses a ganglioside GM1 + CMP-N-acetyl-beta-neuraminate = a ganglioside GD1a + CMP + H(+). It carries out the reaction a ganglioside GM1 (d18:1(4E)) + CMP-N-acetyl-beta-neuraminate = a ganglioside GD1a (d18:1(4E)) + CMP + H(+). The catalysed reaction is ganglioside GM1 (d18:1(4E)/18:0) + CMP-N-acetyl-beta-neuraminate = ganglioside GD1a (18:1(4E)/18:0) + CMP + H(+). It catalyses the reaction a ganglioside GA1 + CMP-N-acetyl-beta-neuraminate = a ganglioside GM1b + CMP + H(+). The enzyme catalyses a ganglioside GA1 (d18:1(4E)) + CMP-N-acetyl-beta-neuraminate = a ganglioside GM1b (d18:1(4E)) + CMP + H(+). It carries out the reaction a ganglioside GD1b + CMP-N-acetyl-beta-neuraminate = a ganglioside GT1b + CMP + H(+). The catalysed reaction is a 3-O-[beta-D-galactosyl-(1-&gt;3)-N-acetyl-alpha-D-galactosaminyl]-L-threonyl-[protein] + CMP-N-acetyl-beta-neuraminate = a 3-O-[N-acetyl-alpha-neuraminyl-(2-&gt;3)-beta-D-galactosyl-(1-&gt;3)-N-acetyl-alpha-D-galactosaminyl]-L-threonyl-[protein] + CMP + H(+). It catalyses the reaction a 3-O-[beta-D-galactosyl-(1-&gt;3)-N-acetyl-alpha-D-galactosaminyl]-L-seryl-[protein] + CMP-N-acetyl-beta-neuraminate = 3-O-[N-acetyl-alpha-neuraminyl-(2-&gt;3)-beta-D-galactosyl-(1-&gt;3)-N-acetyl-alpha-D-galactosaminyl]-L-seryl-[protein] + CMP + H(+). The protein operates within protein modification; protein glycosylation. Its pathway is glycolipid biosynthesis. Its function is as follows. A beta-galactoside alpha2-&gt;3 sialyltransferase involved in terminal sialylation of glycoproteins and glycolipids. Catalyzes the transfer of sialic acid (N-acetyl-neuraminic acid; Neu5Ac) from the nucleotide sugar donor CMP-Neu5Ac onto acceptor Galbeta-(1-&gt;3)-GalNAc-terminated glycoconjugates through an alpha2-3 linkage. Adds sialic acid to the core 1 O-glycan, Galbeta-(1-&gt;3)-GalNAc-O-Ser/Thr, which is a major structure of mucin-type O-glycans. As part of a homeostatic mechanism that regulates CD8-positive T cell numbers, sialylates core 1 O-glycans of T cell glycoproteins, SPN/CD43 and PTPRC/CD45. Prevents premature apoptosis of thymic CD8-positive T cells prior to peripheral emigration, whereas in the secondary lymphoid organs controls the survival of CD8-positive memory T cells generated following a successful immune response. Transfers sialic acid to asialofetuin, presumably onto Galbeta-(1-&gt;3)-GalNAc-O-Ser. Sialylates GM1a, GA1 and GD1b gangliosides to form GD1a, GM1b and GT1b, respectively. The chain is CMP-N-acetylneuraminate-beta-galactosamide-alpha-2,3-sialyltransferase 1 from Homo sapiens (Human).